Here is a 175-residue protein sequence, read N- to C-terminus: UPF0398 protein SPP_0409 (175 aa).

The protein belongs to the UPF0398 family.

This chain is UPF0398 protein SPP_0409, found in Streptococcus pneumoniae (strain P1031).